The chain runs to 776 residues: DNA topoisomerase 1 (776 aa).

The region spanning 1-111 (MKLVIVESPA…VKSDDFFKRV (111 aa)) is the Toprim domain. Positions 7 and 80 each coordinate Mg(2+). In terms of domain architecture, Topo IA-type catalytic spans 132-568 (DANLVNAQQA…FWSGFNHNIE (437 aa)). Positions 166 to 171 (SAGRVQ) are interaction with DNA. Residue Tyr-304 is the O-(5'-phospho-DNA)-tyrosine intermediate of the active site. The C4-type zinc finger occupies 600-627 (CPSCKTGELSLKLGKFGAFLACSNYPEC).

This sequence belongs to the type IA topoisomerase family. As to quaternary structure, monomer. It depends on Mg(2+) as a cofactor.

It catalyses the reaction ATP-independent breakage of single-stranded DNA, followed by passage and rejoining.. Its function is as follows. Releases the supercoiling and torsional tension of DNA, which is introduced during the DNA replication and transcription, by transiently cleaving and rejoining one strand of the DNA duplex. Introduces a single-strand break via transesterification at a target site in duplex DNA. The scissile phosphodiester is attacked by the catalytic tyrosine of the enzyme, resulting in the formation of a DNA-(5'-phosphotyrosyl)-enzyme intermediate and the expulsion of a 3'-OH DNA strand. The free DNA strand then undergoes passage around the unbroken strand, thus removing DNA supercoils. Finally, in the religation step, the DNA 3'-OH attacks the covalent intermediate to expel the active-site tyrosine and restore the DNA phosphodiester backbone. The protein is DNA topoisomerase 1 of Rickettsia felis (strain ATCC VR-1525 / URRWXCal2) (Rickettsia azadi).